The chain runs to 338 residues: Ketol-acid reductoisomerase (NADP(+)) (338 aa).

Residues 1-181 (MKVFYDKDCD…GGGRTGIIET (181 aa)) enclose the KARI N-terminal Rossmann domain. Residues 24–27 (YGSQ), Arg47, Ser50, Thr52, and 82–85 (DEFQ) contribute to the NADP(+) site. Residue His107 is part of the active site. Gly133 serves as a coordination point for NADP(+). Residues 182-327 (TFKDETETDL…EQLRSMMPWI (146 aa)) form the KARI C-terminal knotted domain. Residues Asp190, Glu194, Glu226, and Glu230 each coordinate Mg(2+). Ser251 is a substrate binding site.

The protein belongs to the ketol-acid reductoisomerase family. Mg(2+) is required as a cofactor.

It catalyses the reaction (2R)-2,3-dihydroxy-3-methylbutanoate + NADP(+) = (2S)-2-acetolactate + NADPH + H(+). The enzyme catalyses (2R,3R)-2,3-dihydroxy-3-methylpentanoate + NADP(+) = (S)-2-ethyl-2-hydroxy-3-oxobutanoate + NADPH + H(+). It functions in the pathway amino-acid biosynthesis; L-isoleucine biosynthesis; L-isoleucine from 2-oxobutanoate: step 2/4. The protein operates within amino-acid biosynthesis; L-valine biosynthesis; L-valine from pyruvate: step 2/4. Its function is as follows. Involved in the biosynthesis of branched-chain amino acids (BCAA). Catalyzes an alkyl-migration followed by a ketol-acid reduction of (S)-2-acetolactate (S2AL) to yield (R)-2,3-dihydroxy-isovalerate. In the isomerase reaction, S2AL is rearranged via a Mg-dependent methyl migration to produce 3-hydroxy-3-methyl-2-ketobutyrate (HMKB). In the reductase reaction, this 2-ketoacid undergoes a metal-dependent reduction by NADPH to yield (R)-2,3-dihydroxy-isovalerate. The polypeptide is Ketol-acid reductoisomerase (NADP(+)) (Pseudomonas fluorescens (strain ATCC BAA-477 / NRRL B-23932 / Pf-5)).